Consider the following 198-residue polypeptide: MNRPRPVEKMVGIIKKLPGVGHKMAERLSYHILKMPQVEVDRLIDSIQNARRTMKCCSICCNLSEHDPCPICSDVTREKNIVCVVETPQDLIAVSKVEDYKGLYFVLGGALSPLDAVGPDDIRIDKLIKRLKRDSINEVIIATDADSKGEITAVYLADIIKILGIKVTRLGYGLPVGGDIEYADEITISRAIAGRKEM.

The C4-type zinc-finger motif lies at 57 to 72 (CSICCNLSEHDPCPIC). The Toprim domain occupies 80–175 (NIVCVVETPQ…KVTRLGYGLP (96 aa)).

This sequence belongs to the RecR family.

Functionally, may play a role in DNA repair. It seems to be involved in an RecBC-independent recombinational process of DNA repair. It may act with RecF and RecO. This chain is Recombination protein RecR, found in Endomicrobium trichonymphae.